The primary structure comprises 233 residues: Small ribosomal subunit protein uS2c (233 aa).

It belongs to the universal ribosomal protein uS2 family.

It localises to the plastid. It is found in the chloroplast. This is Small ribosomal subunit protein uS2c (rps2) from Staurastrum punctulatum (Green alga).